The following is a 275-amino-acid chain: Bis(5'-nucleosyl)-tetraphosphatase, symmetrical (275 aa).

This sequence belongs to the Ap4A hydrolase family.

It carries out the reaction P(1),P(4)-bis(5'-adenosyl) tetraphosphate + H2O = 2 ADP + 2 H(+). Its function is as follows. Hydrolyzes diadenosine 5',5'''-P1,P4-tetraphosphate to yield ADP. This is Bis(5'-nucleosyl)-tetraphosphatase, symmetrical from Haemophilus influenzae (strain PittGG).